Reading from the N-terminus, the 162-residue chain is Peptide deformylase-like (162 aa).

This sequence belongs to the polypeptide deformylase family.

In Staphylococcus aureus (strain MRSA252), this protein is Peptide deformylase-like.